The chain runs to 595 residues: NADH-quinone oxidoreductase subunit C/D (595 aa).

The NADH dehydrogenase I subunit C stretch occupies residues 1–185 (MTDLTAQAAC…DPFELTKAKQ (185 aa)). The tract at residues 209–595 (DFMFLNLGPN…IDFVMSDVDR (387 aa)) is NADH dehydrogenase I subunit D.

It in the N-terminal section; belongs to the complex I 30 kDa subunit family. In the C-terminal section; belongs to the complex I 49 kDa subunit family. As to quaternary structure, NDH-1 is composed of 13 different subunits. Subunits NuoB, CD, E, F, and G constitute the peripheral sector of the complex.

It is found in the cell inner membrane. It carries out the reaction a quinone + NADH + 5 H(+)(in) = a quinol + NAD(+) + 4 H(+)(out). NDH-1 shuttles electrons from NADH, via FMN and iron-sulfur (Fe-S) centers, to quinones in the respiratory chain. The immediate electron acceptor for the enzyme in this species is believed to be ubiquinone. Couples the redox reaction to proton translocation (for every two electrons transferred, four hydrogen ions are translocated across the cytoplasmic membrane), and thus conserves the redox energy in a proton gradient. In Enterobacter sp. (strain 638), this protein is NADH-quinone oxidoreductase subunit C/D.